The following is a 275-amino-acid chain: Energy-coupling factor transporter ATP-binding protein EcfA1 (275 aa).

The region spanning 5-240 (IDVKNLSFRY…NDLDQIGLDD (236 aa)) is the ABC transporter domain. Residue 40-47 (GHNGSGKS) participates in ATP binding.

The protein belongs to the ABC transporter superfamily. Energy-coupling factor EcfA family. As to quaternary structure, forms a stable energy-coupling factor (ECF) transporter complex composed of 2 membrane-embedded substrate-binding proteins (S component), 2 ATP-binding proteins (A component) and 2 transmembrane proteins (T component).

It localises to the cell membrane. ATP-binding (A) component of a common energy-coupling factor (ECF) ABC-transporter complex. Unlike classic ABC transporters this ECF transporter provides the energy necessary to transport a number of different substrates. The sequence is that of Energy-coupling factor transporter ATP-binding protein EcfA1 from Streptococcus pneumoniae serotype 4 (strain ATCC BAA-334 / TIGR4).